A 441-amino-acid chain; its full sequence is Polycomb protein EED (441 aa).

Positions 1–72 are disordered; sequence MSEREVSTVP…PGRKSWGKGK (72 aa). S2 bears the N-acetylserine mark. Phosphoserine occurs at positions 2 and 34. A compositionally biased stretch (polar residues) spans 45 to 61; the sequence is ESGTNTERPDTPTNTPN. A Phosphothreonine modification is found at T55. K66 is modified (N6,N6,N6-trimethyllysine; alternate). K66 carries the N6,N6-dimethyllysine; alternate modification. N6-methyllysine; alternate is present on K66. The interval 81 to 441 is interaction with EZH2; it reads SFKCVNSLKE…ASIWRWDRLR (361 aa). 4 WD repeats span residues 91–134, 142–185, 188–228, and 234–275; these read DHNQ…EIRL, DADE…CIKH, GHGN…LVAI, and GHRD…NAIK. N6,N6,N6-trimethyllysine; alternate is present on residues K197, K268, and K284. 3 positions are modified to N6,N6-dimethyllysine; alternate: K197, K268, and K284. Residues K197, K268, and K284 each carry the N6-methyllysine; alternate modification. 3 WD repeats span residues 304–341, 359–399, and 408–441; these read IHRNYVDCVRWLGDLILSKSCENAIVCWKPGKMEDDID, SQCD…PHKA, and KCGAAIRQTSFSRDSSILIAVCDDASIWRWDRLR.

The protein belongs to the WD repeat ESC family. As to quaternary structure, component of the PRC2/EED-EZH2 complex, which includes EED, EZH2, SUZ12, RBBP4 and RBBP7 and possibly AEBP2. The minimum components required for methyltransferase activity of the PRC2/EED-EZH2 complex are EED, EZH2 and SUZ12. Component of the PRC2/EED-EZH1 complex, which includes EED, EZH1, SUZ12, RBBP4 and AEBP2. The PRC2 complex may also interact with DNMT1, DNMT3A, DNMT3B and PHF1 via the EZH2 subunit and with SIRT1 via the SUZ12 subunit. Interacts with HDAC, HDAC2, histone H1, KMT2A/MLL1 and YY1. May interact with ITGA4, ITGAE and ITGB7. Interacts with CDYL. Interacts with BMAL1. Methylated. Binding to histone H1 'Lys-26' promotes mono-, di-, and trimethylation of internal lysines.

The protein localises to the nucleus. Polycomb group (PcG) protein. Component of the PRC2/EED-EZH2 complex, which methylates 'Lys-9' and 'Lys-27' of histone H3, leading to transcriptional repression of the affected target gene. Also recognizes 'Lys-26' trimethylated histone H1 with the effect of inhibiting PRC2 complex methyltransferase activity on nucleosomal histone H3 'Lys-27', whereas H3 'Lys-27' recognition has the opposite effect, enabling the propagation of this repressive mark. The PRC2/EED-EZH2 complex may also serve as a recruiting platform for DNA methyltransferases, thereby linking two epigenetic repression systems. The chain is Polycomb protein EED (EED) from Bos taurus (Bovine).